A 308-amino-acid polypeptide reads, in one-letter code: tRNA pseudouridine synthase B (308 aa).

Aspartate 37 (nucleophile) is an active-site residue.

Belongs to the pseudouridine synthase TruB family. Type 1 subfamily.

It catalyses the reaction uridine(55) in tRNA = pseudouridine(55) in tRNA. Functionally, responsible for synthesis of pseudouridine from uracil-55 in the psi GC loop of transfer RNAs. The polypeptide is tRNA pseudouridine synthase B (Deinococcus radiodurans (strain ATCC 13939 / DSM 20539 / JCM 16871 / CCUG 27074 / LMG 4051 / NBRC 15346 / NCIMB 9279 / VKM B-1422 / R1)).